Consider the following 485-residue polypeptide: Probable WRKY transcription factor 10 (485 aa).

Disordered stretches follow at residues 43–62 and 215–293; these read IFPQ…QRSG and ISIE…SKTQ. Residues 216-264 are compositionally biased toward acidic residues; it reads SIEDSESEDGNKDDDDEDFQYEDEDEDQYDQDQDVDEDEEEEKDEDNVA. A DNA-binding region (WRKY) is located at residues 301–366; sequence SDEDNPNDGY…YDGIHNHPSP (66 aa). 4 residues coordinate Zn(2+): Cys332, Cys337, His361, and His363. The interval 358–417 is disordered; it reads DGIHNHPSPPARRSNSSSRNRSAGATIPQNQNDRTSRLGRAPPTPTPPTPPPSSYTPEEM. Residues 368-380 show a composition bias toward low complexity; it reads ARRSNSSSRNRSA. The span at 399 to 411 shows a compositional bias: pro residues; sequence PPTPTPPTPPPSS.

The protein belongs to the WRKY group I family. As to quaternary structure, interacts with IKU1. In terms of tissue distribution, expressed in male gametophytes (pollen) and in the endosperm of fertilized ovules.

It is found in the nucleus. In terms of biological role, transcription factor. Interacts specifically with the W box (5'-(T)TGAC[CT]-3'), a frequently occurring elicitor-responsive cis-acting element. Modulates seed size by negatively regulating the cellularization of syncytial endosperm. This Arabidopsis thaliana (Mouse-ear cress) protein is Probable WRKY transcription factor 10 (WRKY10).